Consider the following 321-residue polypeptide: uncharacterized protein (321 aa).

This is an uncharacterized protein from Acanthamoeba polyphaga (Amoeba).